The primary structure comprises 105 residues: Pyrimidine/purine nucleoside phosphorylase (105 aa).

This sequence belongs to the nucleoside phosphorylase PpnP family.

It catalyses the reaction a purine D-ribonucleoside + phosphate = a purine nucleobase + alpha-D-ribose 1-phosphate. The catalysed reaction is adenosine + phosphate = alpha-D-ribose 1-phosphate + adenine. The enzyme catalyses cytidine + phosphate = cytosine + alpha-D-ribose 1-phosphate. It carries out the reaction guanosine + phosphate = alpha-D-ribose 1-phosphate + guanine. It catalyses the reaction inosine + phosphate = alpha-D-ribose 1-phosphate + hypoxanthine. The catalysed reaction is thymidine + phosphate = 2-deoxy-alpha-D-ribose 1-phosphate + thymine. The enzyme catalyses uridine + phosphate = alpha-D-ribose 1-phosphate + uracil. It carries out the reaction xanthosine + phosphate = alpha-D-ribose 1-phosphate + xanthine. In terms of biological role, catalyzes the phosphorolysis of diverse nucleosides, yielding D-ribose 1-phosphate and the respective free bases. Can use uridine, adenosine, guanosine, cytidine, thymidine, inosine and xanthosine as substrates. Also catalyzes the reverse reactions. The polypeptide is Pyrimidine/purine nucleoside phosphorylase (Acidovorax ebreus (strain TPSY) (Diaphorobacter sp. (strain TPSY))).